Reading from the N-terminus, the 685-residue chain is DNA-directed RNA polymerase subunit beta' (685 aa).

Zn(2+) contacts are provided by Cys69, Cys71, Cys87, and Cys90. Asp489, Asp491, and Asp493 together coordinate Mg(2+).

This sequence belongs to the RNA polymerase beta' chain family. RpoC1 subfamily. As to quaternary structure, in plastids the minimal PEP RNA polymerase catalytic core is composed of four subunits: alpha, beta, beta', and beta''. When a (nuclear-encoded) sigma factor is associated with the core the holoenzyme is formed, which can initiate transcription. Requires Mg(2+) as cofactor. Zn(2+) serves as cofactor.

Its subcellular location is the plastid. It is found in the chloroplast. The catalysed reaction is RNA(n) + a ribonucleoside 5'-triphosphate = RNA(n+1) + diphosphate. DNA-dependent RNA polymerase catalyzes the transcription of DNA into RNA using the four ribonucleoside triphosphates as substrates. In Gossypium hirsutum (Upland cotton), this protein is DNA-directed RNA polymerase subunit beta'.